A 430-amino-acid chain; its full sequence is Serine--tRNA ligase (430 aa).

237 to 239 (TAE) contacts L-serine. Residue 268 to 270 (RSE) participates in ATP binding. Position 291 (E291) interacts with L-serine. 355-358 (EISS) contributes to the ATP binding site. S391 provides a ligand contact to L-serine.

Belongs to the class-II aminoacyl-tRNA synthetase family. Type-1 seryl-tRNA synthetase subfamily. Homodimer. The tRNA molecule binds across the dimer.

The protein localises to the cytoplasm. It catalyses the reaction tRNA(Ser) + L-serine + ATP = L-seryl-tRNA(Ser) + AMP + diphosphate + H(+). It carries out the reaction tRNA(Sec) + L-serine + ATP = L-seryl-tRNA(Sec) + AMP + diphosphate + H(+). It functions in the pathway aminoacyl-tRNA biosynthesis; selenocysteinyl-tRNA(Sec) biosynthesis; L-seryl-tRNA(Sec) from L-serine and tRNA(Sec): step 1/1. Functionally, catalyzes the attachment of serine to tRNA(Ser). Is also able to aminoacylate tRNA(Sec) with serine, to form the misacylated tRNA L-seryl-tRNA(Sec), which will be further converted into selenocysteinyl-tRNA(Sec). The chain is Serine--tRNA ligase from Cronobacter sakazakii (strain ATCC BAA-894) (Enterobacter sakazakii).